The chain runs to 230 residues: Ureidoacrylate amidohydrolase RutB (230 aa).

The Proton acceptor role is filled by Asp-24. The active site involves Lys-133. Cys-166 functions as the Nucleophile in the catalytic mechanism.

It belongs to the isochorismatase family. RutB subfamily.

It catalyses the reaction (Z)-3-ureidoacrylate + H2O + H(+) = (Z)-3-aminoacrylate + NH4(+) + CO2. The enzyme catalyses (Z)-3-ureidoacrylate + H2O = (Z)-3-aminoacrylate + carbamate + H(+). The catalysed reaction is (Z)-2-methylureidoacrylate + H2O + H(+) = (Z)-2-methylaminoacrylate + NH4(+) + CO2. In terms of biological role, hydrolyzes ureidoacrylate to form aminoacrylate and carbamate. The carbamate hydrolyzes spontaneously, thereby releasing one of the nitrogen atoms of the pyrimidine ring as ammonia and one of its carbon atoms as CO2. The chain is Ureidoacrylate amidohydrolase RutB from Escherichia coli O127:H6 (strain E2348/69 / EPEC).